The following is a 264-amino-acid chain: tRNA (guanine-N(1)-)-methyltransferase (264 aa).

S-adenosyl-L-methionine is bound by residues glycine 125 and 145–150 (LGDFVL).

The protein belongs to the RNA methyltransferase TrmD family. Homodimer.

It localises to the cytoplasm. It carries out the reaction guanosine(37) in tRNA + S-adenosyl-L-methionine = N(1)-methylguanosine(37) in tRNA + S-adenosyl-L-homocysteine + H(+). Its function is as follows. Specifically methylates guanosine-37 in various tRNAs. The sequence is that of tRNA (guanine-N(1)-)-methyltransferase from Burkholderia cenocepacia (strain ATCC BAA-245 / DSM 16553 / LMG 16656 / NCTC 13227 / J2315 / CF5610) (Burkholderia cepacia (strain J2315)).